A 302-amino-acid chain; its full sequence is uncharacterized protein (302 aa).

Functionally, may be a membrane-bound protein, possibly involved in IAA or IAA-Lysine transport. This is an uncharacterized protein from Pseudomonas savastanoi (Pseudomonas syringae pv. savastanoi).